The sequence spans 453 residues: Ribulose bisphosphate carboxylase large chain (453 aa).

A propeptide spanning residues 1–2 (MS) is cleaved from the precursor. P3 carries the post-translational modification N-acetylproline. K14 is modified (N6,N6,N6-trimethyllysine). Positions 123 and 173 each coordinate substrate. Residue K175 is the Proton acceptor of the active site. Substrate is bound at residue K177. The Mg(2+) site is built by K201, D203, and E204. The residue at position 201 (K201) is an N6-carboxylysine. Residue H294 is the Proton acceptor of the active site. R295, H327, and S379 together coordinate substrate.

It belongs to the RuBisCO large chain family. Type I subfamily. In terms of assembly, heterohexadecamer of 8 large chains and 8 small chains; disulfide-linked. The disulfide link is formed within the large subunit homodimers. Mg(2+) serves as cofactor. In terms of processing, the disulfide bond which can form in the large chain dimeric partners within the hexadecamer appears to be associated with oxidative stress and protein turnover.

The protein localises to the plastid. Its subcellular location is the chloroplast. It carries out the reaction 2 (2R)-3-phosphoglycerate + 2 H(+) = D-ribulose 1,5-bisphosphate + CO2 + H2O. The catalysed reaction is D-ribulose 1,5-bisphosphate + O2 = 2-phosphoglycolate + (2R)-3-phosphoglycerate + 2 H(+). In terms of biological role, ruBisCO catalyzes two reactions: the carboxylation of D-ribulose 1,5-bisphosphate, the primary event in carbon dioxide fixation, as well as the oxidative fragmentation of the pentose substrate in the photorespiration process. Both reactions occur simultaneously and in competition at the same active site. The sequence is that of Ribulose bisphosphate carboxylase large chain from Rubia tinctorum (Madder).